Reading from the N-terminus, the 252-residue chain is 3-dehydroquinate dehydratase (252 aa).

Residues S21, 46 to 48 (EWR), and R82 contribute to the 3-dehydroquinate site. The Proton donor/acceptor role is filled by H143. K170 serves as the catalytic Schiff-base intermediate with substrate. Residues R213, S232, and Q236 each coordinate 3-dehydroquinate.

The protein belongs to the type-I 3-dehydroquinase family. In terms of assembly, homodimer.

The catalysed reaction is 3-dehydroquinate = 3-dehydroshikimate + H2O. The protein operates within metabolic intermediate biosynthesis; chorismate biosynthesis; chorismate from D-erythrose 4-phosphate and phosphoenolpyruvate: step 3/7. Involved in the third step of the chorismate pathway, which leads to the biosynthesis of aromatic amino acids. Catalyzes the cis-dehydration of 3-dehydroquinate (DHQ) and introduces the first double bond of the aromatic ring to yield 3-dehydroshikimate. The sequence is that of 3-dehydroquinate dehydratase from Escherichia coli O139:H28 (strain E24377A / ETEC).